Reading from the N-terminus, the 313-residue chain is MAAPMNGQVCVVTGASRGIGRGIALQLCKAGATVYITGRHLDTLRVVAQEAQSLGGQCVPVVCDSSQESEVRSLFEQVDREQQGRLDVLVNNAYAGVQTILNTRNKAFWETPASMWDDINNVGLRGHYFCSVYGARLMVPAGQGLIVVISSPGSLQYMFNVPYGVGKAACDKLAADCAHELRRHGVSCVSLWPGIVQTELLKEHMAKEEVLQDPVLKQFKSAFSSAETTELSGKCVVALATDPNILSLSGKVLPSCDLARRYGLRDVDGRPVQDYLSLSSVLSHVSGLGWLASYLPSFLRVPKWIIALYTSKF.

Ala-2 carries the post-translational modification N-acetylalanine. Position 19 (Ile-19) interacts with NAD(+). Position 21 is an omega-N-methylarginine (Arg-21). Asp-64 serves as a coordination point for NAD(+). Ser-151 lines the substrate pocket. Residues Tyr-163, Lys-167, and Thr-198 each contribute to the NAD(+) site. Catalysis depends on Tyr-163, which acts as the Proton acceptor. Residues 235–313 (CVVALATDPN…WIIALYTSKF (79 aa)) form a required for ER localization region.

The protein belongs to the short-chain dehydrogenases/reductases (SDR) family. In terms of tissue distribution, detected in heart, liver, adrenal glands, and at low levels in skeletal muscle, kidney, pancreas and brain.

It localises to the endoplasmic reticulum. The enzyme catalyses 17alpha-estradiol + NADP(+) = estrone + NADPH + H(+). It catalyses the reaction testosterone + NADP(+) = androst-4-ene-3,17-dione + NADPH + H(+). It carries out the reaction prostaglandin E1 + NADPH + H(+) = prostaglandin F1 + NADP(+). The catalysed reaction is isatin + NADPH + H(+) = 3-hydroxyindolin-2-one + NADP(+). Its function is as follows. NADPH-dependent oxidoreductase which catalyzes the reduction of steroids (estrone, androstene-3,17-dione and cortisone) as well as prostaglandin E1, isatin and xenobiotics in vitro. May have a role in steroid and/or xenobiotic metabolism. This Homo sapiens (Human) protein is Dehydrogenase/reductase SDR family member 1.